The sequence spans 397 residues: 8-amino-7-oxononanoate synthase (397 aa).

Arg23 provides a ligand contact to substrate. Residue Gly110–Tyr111 participates in pyridoxal 5'-phosphate binding. His135 provides a ligand contact to substrate. Pyridoxal 5'-phosphate-binding residues include Ser181, His209, and Thr237. Lys240 is subject to N6-(pyridoxal phosphate)lysine. Thr354 lines the substrate pocket.

The protein belongs to the class-II pyridoxal-phosphate-dependent aminotransferase family. BioF subfamily. In terms of assembly, homodimer. It depends on pyridoxal 5'-phosphate as a cofactor.

It carries out the reaction 6-carboxyhexanoyl-[ACP] + L-alanine + H(+) = (8S)-8-amino-7-oxononanoate + holo-[ACP] + CO2. Its pathway is cofactor biosynthesis; biotin biosynthesis. In terms of biological role, catalyzes the decarboxylative condensation of pimeloyl-[acyl-carrier protein] and L-alanine to produce 8-amino-7-oxononanoate (AON), [acyl-carrier protein], and carbon dioxide. This Anaeromyxobacter sp. (strain Fw109-5) protein is 8-amino-7-oxononanoate synthase.